The following is a 365-amino-acid chain: Pre-mRNA-splicing factor srp2 (365 aa).

RRM domains lie at 6-69 (LFVG…RIVV) and 100-166 (LIVE…AVTL). The interval 166-365 (LREDPDAANE…SAEGQVAAEW (200 aa)) is disordered. The segment covering 184-194 (FRSRSPPARRR) has biased composition (basic residues). Phosphoserine is present on residues Ser186, Ser188, Ser276, Ser294, Ser296, Ser298, and Ser308. Residues 195–307 (YRDDYRRGGD…SPRRDREENR (113 aa)) are compositionally biased toward basic and acidic residues. The span at 316–332 (SYSAAPEASMESSAPTE) shows a compositional bias: low complexity. Polar residues predominate over residues 341–353 (EEQQPLQNHSDVG).

This sequence belongs to the splicing factor SR family. Post-translationally, extensively phosphorylated on serine residues in the RS domain.

Its subcellular location is the nucleus. Its function is as follows. Has a role in pre-mRNA splicing where it is involved in spliceosome assembly. This is Pre-mRNA-splicing factor srp2 (srp2) from Schizosaccharomyces pombe (strain 972 / ATCC 24843) (Fission yeast).